A 245-amino-acid chain; its full sequence is Flavin-dependent thymidylate synthase (245 aa).

A ThyX domain is found at 6-220 (PRVELLAHTP…PELFAHAGAK (215 aa)). FAD contacts are provided by residues S65, 89–91 (RHR), and Q97. DUMP-binding positions include 86–89 (QLVR), 97–101 (QQSQR), and R159. A ThyX motif motif is present at residues 89 to 99 (RHRIASFSQQS). FAD is bound by residues 175–177 (NCR) and H181. R186 contacts dUMP. The active-site Involved in ionization of N3 of dUMP, leading to its activation is R186.

This sequence belongs to the thymidylate synthase ThyX family. Homotetramer. The cofactor is FAD.

The catalysed reaction is dUMP + (6R)-5,10-methylene-5,6,7,8-tetrahydrofolate + NADPH + H(+) = dTMP + (6S)-5,6,7,8-tetrahydrofolate + NADP(+). It participates in pyrimidine metabolism; dTTP biosynthesis. Catalyzes the reductive methylation of 2'-deoxyuridine-5'-monophosphate (dUMP) to 2'-deoxythymidine-5'-monophosphate (dTMP) while utilizing 5,10-methylenetetrahydrofolate (mTHF) as the methyl donor, and NADPH and FADH(2) as the reductant. The polypeptide is Flavin-dependent thymidylate synthase (Nitratidesulfovibrio vulgaris (strain ATCC 29579 / DSM 644 / CCUG 34227 / NCIMB 8303 / VKM B-1760 / Hildenborough) (Desulfovibrio vulgaris)).